The following is a 226-amino-acid chain: Large ribosomal subunit protein uL3 (226 aa).

Residues 135–158 are disordered; it reads MSSQRASHGNSRSHNVPGSIGMAQ. Residues 137 to 150 are compositionally biased toward polar residues; that stretch reads SQRASHGNSRSHNV. An N5-methylglutamine modification is found at glutamine 158.

It belongs to the universal ribosomal protein uL3 family. In terms of assembly, part of the 50S ribosomal subunit. Forms a cluster with proteins L14 and L19. Methylated by PrmB.

Functionally, one of the primary rRNA binding proteins, it binds directly near the 3'-end of the 23S rRNA, where it nucleates assembly of the 50S subunit. The chain is Large ribosomal subunit protein uL3 from Polaromonas naphthalenivorans (strain CJ2).